The sequence spans 308 residues: Ycf92-like protein (308 aa).

Transmembrane regions (helical) follow at residues 41 to 61, 75 to 95, 153 to 173, 192 to 212, and 288 to 308; these read FANN…TLIA, LLTL…GLGV, ISTI…TTAP, IPVT…PLVL, and WLAI…GNQI.

This sequence belongs to the ycf92 family.

It is found in the membrane. This Nostoc sp. (strain PCC 7120 / SAG 25.82 / UTEX 2576) protein is Ycf92-like protein.